Consider the following 98-residue polypeptide: Small ribosomal subunit protein uS19 (98 aa).

The disordered stretch occupies residues 77–98 (TRTFRGHAGGKAEKGGSAPKRK).

Belongs to the universal ribosomal protein uS19 family.

Protein S19 forms a complex with S13 that binds strongly to the 16S ribosomal RNA. In Chlorobium luteolum (strain DSM 273 / BCRC 81028 / 2530) (Pelodictyon luteolum), this protein is Small ribosomal subunit protein uS19.